The following is a 908-amino-acid chain: Mycobactin import ATP-binding/permease protein IrtA (908 aa).

Residues 1–329 (MARGFQGVML…SRLLAPLKKP (329 aa)) are Cytoplasmic-facing. The region spanning 15–124 (ARDHQATVVD…MGSRGFSVPE (110 aa)) is the FAD-binding FR-type domain. Residues 16–245 (RDHQATVVDK…AQAYWTEGRA (230 aa)) form a siderophore interaction domain region. FAD is bound by residues 70-73 (RAYT), 87-91 (DMVLH), 97-98 (AS), and 241-243 (TEG). Residues 245-311 (AMGSSRGETS…GAAQPRTPVR (67 aa)) are disordered. Low complexity predominate over residues 253–309 (TSTPAKPAAKTAPAKAAAKPAAASGAGTPEHAAAPAAATTGAPQAAPAPGAAQPRTP). Residues 330-350 (LIVSGVLQALITLIELAPFVL) form a helical membrane-spanning segment. The ABC transmembrane type-1 domain maps to 331 to 613 (IVSGVLQALI…IGYGLSGIQT (283 aa)). Residues 351-371 (LVELARLLLGGAEAERLWTLG) lie on the Periplasmic side of the membrane. The chain crosses the membrane as a helical span at residues 372–392 (LTAVSLIGLGAVLAAAMTLWL). The Cytoplasmic portion of the chain corresponds to 393–444 (HRVDARFAHELRGRLLTKLSRLPLGWFTRRGSASTKQLVQDDTLALHYLITH). The helical transmembrane segment at 445–465 (AIPDAVAAVVAPVAVLVYLFV) threads the bilayer. Topologically, residues 466–469 (ADWR) are periplasmic. A helical transmembrane segment spans residues 470–490 (VALVLFIPVLVYLVLMSVMTI). Residues 491–557 (QSGSKIAQAP…PFVGKKTLMD (67 aa)) lie on the Cytoplasmic side of the membrane. The helical transmembrane segment at 558–578 (LVTRPATFLWIILVAGVPLVV) threads the bilayer. At 579 to 586 (TGRMDPVN) the chain is on the periplasmic side. Residues 587-607 (LLPFLLLGTTFGARLLGIGYG) form a helical membrane-spanning segment. Residues 608 to 908 (LSGIQTGMLA…VSADAVEVGR (301 aa)) lie on the Cytoplasmic side of the membrane. The ABC transporter domain occupies 654–887 (VELDRVSFEY…GGRYRGLWDS (234 aa)). 687–694 (GPSGSGKS) is a binding site for ATP.

The protein belongs to the ABC transporter superfamily. Siderophore-Fe(3+) uptake transporter (SIUT) (TC 3.A.1.21) family. In terms of assembly, forms a heterodimer with IrtB. FAD is required as a cofactor.

The protein resides in the cell inner membrane. Its activity is regulated as follows. The ATPase activity of IrtAB is stimulated more than 38-fold in the presence of Fe-MBT, and more than 10-fold in the presence of Fe-cMBT. Functionally, part of the ABC transporter complex IrtAB involved in the import of iron-bound mycobactin (Fe-MBT) and carboxymycobactin (Fe-cMBT). Has a preference for Fe-MBT over Fe-cMBT. Mycobactins are then reduced by the siderophore interaction domain to facilitate iron release in the bacterial cell. Transmembrane domains (TMD) form a pore in the membrane and the ATP-binding domain (NBD) is responsible for energy generation. In Mycolicibacterium thermoresistibile (strain ATCC 19527 / DSM 44167 / CIP 105390 / JCM 6362 / NCTC 10409 / 316) (Mycobacterium thermoresistibile), this protein is Mycobactin import ATP-binding/permease protein IrtA.